The chain runs to 413 residues: ATP-dependent RNA helicase RhlB (413 aa).

The Q motif motif lies at 9 to 37 (QRFADLPLHPQILAALNDQNFEYCTPIQA). The Helicase ATP-binding domain maps to 40–217 (LPLTLQGKDV…FEDMNDPEYI (178 aa)). 53-60 (AQTGTGKT) contributes to the ATP binding site. Residues 163 to 166 (DEAD) carry the DEAD box motif. The region spanning 241-388 (KMALLMTLLE…VSQYDPDSLI (148 aa)) is the Helicase C-terminal domain.

This sequence belongs to the DEAD box helicase family. RhlB subfamily. In terms of assembly, component of the RNA degradosome, which is a multiprotein complex involved in RNA processing and mRNA degradation.

The protein localises to the cytoplasm. It catalyses the reaction ATP + H2O = ADP + phosphate + H(+). In terms of biological role, DEAD-box RNA helicase involved in RNA degradation. Has RNA-dependent ATPase activity and unwinds double-stranded RNA. The polypeptide is ATP-dependent RNA helicase RhlB (Actinobacillus succinogenes (strain ATCC 55618 / DSM 22257 / CCUG 43843 / 130Z)).